Here is a 205-residue protein sequence, read N- to C-terminus: Putative 3-methyladenine DNA glycosylase (205 aa).

This sequence belongs to the DNA glycosylase MPG family.

In Clostridium perfringens (strain SM101 / Type A), this protein is Putative 3-methyladenine DNA glycosylase.